Consider the following 500-residue polypeptide: Glutelin type-B 4 (500 aa).

The signal sequence occupies residues 1 to 24 (MATIAFSRLSIYFCVLLLCHGSMA). Intrachain disulfides connect Cys-45/Cys-78 and Cys-121/Cys-310. 2 consecutive Cupin type-1 domains span residues 50-245 (LQAF…LVAK) and 316-465 (LNIE…EQAR). Residues 481 to 493 (RYQQQTYPGFSNE) are compositionally biased toward polar residues. Positions 481–500 (RYQQQTYPGFSNESENEALE) are disordered.

It belongs to the 11S seed storage protein (globulins) family. Hexamer; each subunit is composed of an acidic and a basic chain derived from a single precursor and linked by a disulfide bond. In terms of tissue distribution, expressed in endosperm (at protein level).

Seed storage protein. This Oryza sativa subsp. japonica (Rice) protein is Glutelin type-B 4 (GLUB4).